A 202-amino-acid chain; its full sequence is Dephospho-CoA kinase (202 aa).

The DPCK domain occupies 5 to 202; that stretch reads VIGLTGGIGS…KKYLTLTKMV (198 aa). 13-18 provides a ligand contact to ATP; sequence GSGKTT.

It belongs to the CoaE family.

The protein resides in the cytoplasm. The catalysed reaction is 3'-dephospho-CoA + ATP = ADP + CoA + H(+). It participates in cofactor biosynthesis; coenzyme A biosynthesis; CoA from (R)-pantothenate: step 5/5. Its function is as follows. Catalyzes the phosphorylation of the 3'-hydroxyl group of dephosphocoenzyme A to form coenzyme A. The polypeptide is Dephospho-CoA kinase (Colwellia psychrerythraea (strain 34H / ATCC BAA-681) (Vibrio psychroerythus)).